The chain runs to 341 residues: MVTNPGGGSTDAGGGPVRHIPVLLNEVLAALSPAPGKLILDGTFGAGGYSAAILAAGAEVIALDRDPSAIAAGQAMVAAHAGRLRLIHAQFSNLGDHAPQGGLDGVVLDIGVSSMQIDEPERGFSFQKSGPLDMRMSATGVSAADVVNRAKVADLIRIFHFLGEENQAPRIAHAIEKRREEKPFETTRDLAGLIELVTPRKMKDKIHPATRVFQALRIFVNDELGELAQALFAAERTLKPGGRLVVVTFHSLEDRIVKKFFSDRAGRATGSRHLPAAHERAATFTAIGKPMVSASEAEAEANPRARSAKLRAGLRTDAAAEAADMSLFGFPNLASLGKLGG.

S-adenosyl-L-methionine is bound by residues 47-49 (GGY), D64, F91, D109, and Q116.

It belongs to the methyltransferase superfamily. RsmH family.

It is found in the cytoplasm. It catalyses the reaction cytidine(1402) in 16S rRNA + S-adenosyl-L-methionine = N(4)-methylcytidine(1402) in 16S rRNA + S-adenosyl-L-homocysteine + H(+). Its function is as follows. Specifically methylates the N4 position of cytidine in position 1402 (C1402) of 16S rRNA. The chain is Ribosomal RNA small subunit methyltransferase H from Rhizobium etli (strain ATCC 51251 / DSM 11541 / JCM 21823 / NBRC 15573 / CFN 42).